The chain runs to 249 residues: Pyridoxine 5'-phosphate synthase (249 aa).

Asn7 is a 3-amino-2-oxopropyl phosphate binding site. 9–10 (DH) serves as a coordination point for 1-deoxy-D-xylulose 5-phosphate. Arg18 is a binding site for 3-amino-2-oxopropyl phosphate. His43 serves as the catalytic Proton acceptor. 1-deoxy-D-xylulose 5-phosphate-binding residues include Arg45 and His50. Glu70 functions as the Proton acceptor in the catalytic mechanism. Thr100 contacts 1-deoxy-D-xylulose 5-phosphate. Catalysis depends on His190, which acts as the Proton donor. Residues Gly191 and 212–213 (GH) each bind 3-amino-2-oxopropyl phosphate.

Belongs to the PNP synthase family. In terms of assembly, homooctamer; tetramer of dimers.

Its subcellular location is the cytoplasm. The enzyme catalyses 3-amino-2-oxopropyl phosphate + 1-deoxy-D-xylulose 5-phosphate = pyridoxine 5'-phosphate + phosphate + 2 H2O + H(+). Its pathway is cofactor biosynthesis; pyridoxine 5'-phosphate biosynthesis; pyridoxine 5'-phosphate from D-erythrose 4-phosphate: step 5/5. Catalyzes the complicated ring closure reaction between the two acyclic compounds 1-deoxy-D-xylulose-5-phosphate (DXP) and 3-amino-2-oxopropyl phosphate (1-amino-acetone-3-phosphate or AAP) to form pyridoxine 5'-phosphate (PNP) and inorganic phosphate. The sequence is that of Pyridoxine 5'-phosphate synthase from Synechococcus sp. (strain CC9605).